The chain runs to 236 residues: 2-C-methyl-D-erythritol 4-phosphate cytidylyltransferase (236 aa).

This sequence belongs to the IspD/TarI cytidylyltransferase family. IspD subfamily.

The enzyme catalyses 2-C-methyl-D-erythritol 4-phosphate + CTP + H(+) = 4-CDP-2-C-methyl-D-erythritol + diphosphate. The protein operates within isoprenoid biosynthesis; isopentenyl diphosphate biosynthesis via DXP pathway; isopentenyl diphosphate from 1-deoxy-D-xylulose 5-phosphate: step 2/6. Its function is as follows. Catalyzes the formation of 4-diphosphocytidyl-2-C-methyl-D-erythritol from CTP and 2-C-methyl-D-erythritol 4-phosphate (MEP). In Pseudomonas syringae pv. syringae (strain B728a), this protein is 2-C-methyl-D-erythritol 4-phosphate cytidylyltransferase.